A 652-amino-acid chain; its full sequence is uncharacterized protein (652 aa).

The segment covering 1 to 13 (MSVTESKAKTERK) has biased composition (basic and acidic residues). The tract at residues 1-21 (MSVTESKAKTERKSSRKPAKT) is disordered.

This sequence belongs to the ParB family.

This is an uncharacterized protein from Escherichia coli (strain K12).